A 1161-amino-acid polypeptide reads, in one-letter code: Translation initiation factor IF-2 (1161 aa).

The segment at 67-561 (KSSFKAANEQ…RRAMELRAAK (495 aa)) is disordered. The segment covering 83 to 105 (QNKDSNSRSKPLNKEKPSKESLN) has biased composition (basic and acidic residues). Residues 139–154 (SRISNLQSQVLPNSHN) show a composition bias toward polar residues. Composition is skewed to basic and acidic residues over residues 164–180 (NPNE…EKKS) and 211–220 (KDIKANKKND). Low complexity-rich tracts occupy residues 224 to 250 (NQRP…PRIK) and 268 to 282 (NSNR…PPSN). Composition is skewed to polar residues over residues 295–311 (RQVT…QGVS), 352–362 (RQGAPNRQGSP), and 380–393 (LNRS…QNPS). The segment covering 412 to 432 (ASDKEKLNRSNFEKQKVEPPK) has biased composition (basic and acidic residues). The span at 440–461 (SRLNASPTAKKTPHRSFTNNSK) shows a compositional bias: polar residues. Composition is skewed to basic and acidic residues over residues 464–478 (GRSD…EALR) and 543–561 (KETT…RAAK). The tr-type G domain occupies 653-830 (KRPPVITVMG…EVEDLQANPE (178 aa)). Residues 662–669 (GHVDHGKT) are G1. GTP is bound at residue 662 to 669 (GHVDHGKT). A G2 region spans residues 687-691 (GITQH). Residues 712-715 (DTPG) form a G3 region. GTP-binding positions include 712–716 (DTPGH) and 766–769 (NKID). The G4 stretch occupies residues 766–769 (NKID). The tract at residues 802–804 (SAI) is G5.

This sequence belongs to the TRAFAC class translation factor GTPase superfamily. Classic translation factor GTPase family. IF-2 subfamily.

It is found in the cytoplasm. In terms of biological role, one of the essential components for the initiation of protein synthesis. Protects formylmethionyl-tRNA from spontaneous hydrolysis and promotes its binding to the 30S ribosomal subunits. Also involved in the hydrolysis of GTP during the formation of the 70S ribosomal complex. The protein is Translation initiation factor IF-2 of Prochlorococcus marinus (strain MIT 9515).